The following is a 349-amino-acid chain: UPF0324 inner membrane protein YeiH (349 aa).

At 1–12 the chain is on the periplasmic side; the sequence is MTNITLQKQHRT. A helical membrane pass occupies residues 13-32; the sequence is LWHFIPGLALSAVITGVALW. Topologically, residues 33-35 are cytoplasmic; sequence GGS. Residues 36–58 form a helical membrane-spanning segment; it reads IPAVAGAGFSALTLAILLGMVLG. Residues 59-99 are Periplasmic-facing; sequence NTIYPHIWKSCDGGVLFAKQYLLRLGIILYGFRLTFSQIAD. The helical transmembrane segment at 100–122 threads the bilayer; that stretch reads VGISGIIIDVLTLSSTFLLACFL. At 123-131 the chain is on the cytoplasmic side; it reads GQKVFGLDK. A helical membrane pass occupies residues 132–151; sequence HTSWLIGAGSSICGAAAVLA. The Periplasmic portion of the chain corresponds to 152 to 162; sequence TEPVVKAEASK. Residues 163 to 185 form a helical membrane-spanning segment; that stretch reads VTVAVATVVIFGTVAIFLYPAIY. At 186 to 261 the chain is on the cytoplasmic side; sequence PLMSQWFSPE…SGANSGEKSK (76 aa). The helical transmembrane segment at 262–283 threads the bilayer; that stretch reads ITIPWFAILFIVVAIFNSFHLL. Over 284 to 289 the chain is Periplasmic; it reads PQSVVN. Residues 290–312 traverse the membrane as a helical segment; it reads MLVTLDTFLLAMAMAALGLTTHV. The Cytoplasmic portion of the chain corresponds to 313–321; it reads SALKKAGAK. A helical membrane pass occupies residues 322-344; that stretch reads PLLMALVLFAWLIVGGGAINYVI. At 345 to 349 the chain is on the periplasmic side; that stretch reads QSVIA.

The protein belongs to the UPF0324 family.

Its subcellular location is the cell inner membrane. The chain is UPF0324 inner membrane protein YeiH (yeiH) from Escherichia coli O157:H7.